The following is a 303-amino-acid chain: Putative deoxyribose-phosphate aldolase (303 aa).

Residue Asp-157 is the Proton donor/acceptor of the active site. The Schiff-base intermediate with acetaldehyde role is filled by Lys-220. Lys-256 acts as the Proton donor/acceptor in catalysis.

The protein belongs to the DeoC/FbaB aldolase family. DeoC type 2 subfamily.

It carries out the reaction 2-deoxy-D-ribose 5-phosphate = D-glyceraldehyde 3-phosphate + acetaldehyde. Its pathway is carbohydrate degradation; 2-deoxy-D-ribose 1-phosphate degradation; D-glyceraldehyde 3-phosphate and acetaldehyde from 2-deoxy-alpha-D-ribose 1-phosphate: step 2/2. In terms of biological role, catalyzes a reversible aldol reaction between acetaldehyde and D-glyceraldehyde 3-phosphate to generate 2-deoxy-D-ribose 5-phosphate. The chain is Putative deoxyribose-phosphate aldolase from Caenorhabditis elegans.